We begin with the raw amino-acid sequence, 214 residues long: Ubiquitin-conjugating enzyme E2 21 (214 aa).

A UBC core domain is found at 21 to 168 (ARVTRKCKEV…AVYWTSYFAN (148 aa)). Cys-106 (glycyl thioester intermediate) is an active-site residue. Residues 172-214 (DVEPDFNRKVGRLIEMGIRETEAIVYLSCNNWKLEQALQFIFD) form the UBA domain.

This sequence belongs to the ubiquitin-conjugating enzyme family.

It carries out the reaction S-ubiquitinyl-[E1 ubiquitin-activating enzyme]-L-cysteine + [E2 ubiquitin-conjugating enzyme]-L-cysteine = [E1 ubiquitin-activating enzyme]-L-cysteine + S-ubiquitinyl-[E2 ubiquitin-conjugating enzyme]-L-cysteine.. It functions in the pathway protein modification; protein ubiquitination. Its function is as follows. Acts with E3 ubiquitin-protein ligase trim-21 to catalyze the 'Lys-48'-linked polyubiquitination of ced-1, promoting its proteasomal degradation to maintain appropriate ced-1 levels for apoptotic cell clearance. This chain is Ubiquitin-conjugating enzyme E2 21 (ubc-21), found in Caenorhabditis elegans.